The sequence spans 103 residues: Thrombin inhibitor rhodniin (103 aa).

Kazal-like domains follow at residues 1 to 50 (EGGE…PCEP) and 51 to 103 (DEDE…PCRT). Disulfide bonds link Cys6–Cys31, Cys8–Cys27, Cys16–Cys48, Cys57–Cys84, Cys60–Cys80, and Cys69–Cys101.

It localises to the secreted. Thrombin-specific inhibitor. Appears to form 1:1 complexes with thrombin. Prevents blood clotting to allow the insect to feed on blood. This chain is Thrombin inhibitor rhodniin, found in Rhodnius prolixus (Triatomid bug).